A 329-amino-acid chain; its full sequence is Pantothenate kinase (329 aa).

Residue 107–114 (GSVAVGKS) coordinates ATP.

Belongs to the prokaryotic pantothenate kinase family.

It is found in the cytoplasm. It catalyses the reaction (R)-pantothenate + ATP = (R)-4'-phosphopantothenate + ADP + H(+). The protein operates within cofactor biosynthesis; coenzyme A biosynthesis; CoA from (R)-pantothenate: step 1/5. The protein is Pantothenate kinase of Streptomyces avermitilis (strain ATCC 31267 / DSM 46492 / JCM 5070 / NBRC 14893 / NCIMB 12804 / NRRL 8165 / MA-4680).